Here is a 531-residue protein sequence, read N- to C-terminus: MGSLNTEDVLENSSAFGVTNPLDPEEFRRQGHMIIDFLADYYRDVEKYPVRSQVEPGYLRKRLPETAPYNPESIETILQDVTTEIIPGLTHWQSPNYYAYFPSSGSVAGFLGEMLSTGFNVVGFNWMSSPAATELESVVMDWFGKMLNLPESFLFSGSGGGVLQGTSCEAILCTLTAARDRKLNKIGREHIGRLVVYGSDQTHCALQKAAQVAGINPKNFRAIKTFKENSFGLSAATLREVILEDIEAGLIPLFVCPTVGTTSSTAVDPISPICEVAKEYEMWVHVDAAYAGSACICPEFRHFIDGVEEADSFSLNAHKWFFTTLDCCCLWVKDPSALVKALSTNPEYLRNKATESRQVVDYKDWQIALSRRFRSLKLWMVLRSYGVTNLRNFLRSHVKMAKTFEGLICMDGRFEITVPRTFAMVCFRLLPPKTIKVYDNGVHQNGNGVVPLRDENENLVLANKLNQVYLETVNATGSVYMTHAVVGGVYMIRFAVGSTLTEERHVIYAWKILQEHADLILGKFSEADFSS.

K319 is modified (N6-(pyridoxal phosphate)lysine).

The protein belongs to the group II decarboxylase family. In terms of assembly, homodimer. Pyridoxal 5'-phosphate is required as a cofactor. In terms of tissue distribution, predominantly expressed in the roots and stems, while a lower level expression is seen in the sepals and carpels of fully expanded flowers.

The enzyme catalyses L-tyrosine + H(+) = tyramine + CO2. It carries out the reaction L-dopa + H(+) = dopamine + CO2. It catalyses the reaction 5-hydroxy-L-tryptophan + H(+) = serotonin + CO2. Functionally, marginally higher substrate specificity for L-DOPA over L-tyrosine. The chain is Tyrosine/DOPA decarboxylase 2 (TYDC2) from Papaver somniferum (Opium poppy).